The sequence spans 206 residues: MVRYLGPHVKVIRKLGSLRAFTKKKIKRYFKLDTKKRKLSFNKKTSKYKIRLKEKQKLRFNFAISEKQLFNYVKKAIKLKGSSGENLLVALEMRLDNIVYRLGLAPTIISSRQLINHGHIYVDGKVVNIPSFKCKPTNNIKIKDNLVSKRIIEKNIELLDKYFRAPSHLYFNKKKLEAKVINMVKREDIKLIINELLIIEFYSRKV.

Residues 93–161 (MRLDNIVYRL…IEKNIELLDK (69 aa)) enclose the S4 RNA-binding domain.

Belongs to the universal ribosomal protein uS4 family. As to quaternary structure, part of the 30S ribosomal subunit. Contacts protein S5. The interaction surface between S4 and S5 is involved in control of translational fidelity.

It localises to the plastid. One of the primary rRNA binding proteins, it binds directly to 16S rRNA where it nucleates assembly of the body of the 30S subunit. Its function is as follows. With S5 and S12 plays an important role in translational accuracy. The sequence is that of Small ribosomal subunit protein uS4c (rps4) from Euglena longa (Euglenophycean alga).